A 261-amino-acid chain; its full sequence is Cathepsin G (261 aa).

The signal sequence occupies residues 1–18 (MQPLLLLLTFILLQGDEA). The propeptide at 19–20 (GK) is activation peptide. The important for antimicrobial activity stretch occupies residues 21-25 (IIGGR). Residues 21-243 (IIGGREARPH…FMPWIKRTMR (223 aa)) form the Peptidase S1 domain. A disulfide bond links C49 and C65. H64 acts as the Charge relay system in catalysis. A glycan (N-linked (GlcNAc...) asparagine) is linked at N71. Positions 97–111 (HPDYNPQNIRNDIML) are important for antimicrobial activity. D108 functions as the Charge relay system in the catalytic mechanism. Disulfide bonds link C142/C207 and C172/C186. The Charge relay system role is filled by S201.

The protein belongs to the peptidase S1 family. In adult, detected only in bone marrow where expression is restricted to a small population of early myeloid cells.

The protein resides in the cell membrane. The protein localises to the cytoplasmic granule. It is found in the secreted. It localises to the cytoplasm. Its subcellular location is the cytosol. The protein resides in the lysosome. The protein localises to the nucleus. It catalyses the reaction Specificity similar to chymotrypsin C.. With respect to regulation, inhibited by chymostatin, phenylmethanesulfonyl fluoride and diisopropyl fluorophosphate. Serine protease with trypsin- and chymotrypsin-like specificity. Also displays antibacterial activity against Gram-negative and Gram-positive bacteria independent of its protease activity. Prefers Phe and Tyr residues in the P1 position of substrates but also cleaves efficiently after Trp and Leu. Shows a preference for negatively charged amino acids in the P2' position and for aliphatic amino acids both upstream and downstream of the cleavage site. Required for recruitment and activation of platelets which is mediated by the F2RL3/PAR4 platelet receptor. Binds reversibly to and stimulates B cells and CD4(+) and CD8(+) T cells. Also binds reversibly to natural killer (NK) cells and enhances NK cell cytotoxicity through its protease activity. Cleaves complement C3. Cleaves vimentin. Cleaves thrombin receptor F2R/PAR1. Cleaves the synovial mucin-type protein PRG4/lubricin. Cleaves and activates IL36G which promotes expression of chemokines CXCL1 and CXLC8 in keratinocytes. Cleaves IL33 into mature forms which have greater activity than the unprocessed form. Cleaves coagulation factor F8 to produce a partially activated form. Also cleaves and activates coagulation factor F10. Cleaves leukocyte cell surface protein SPN/CD43 to release its extracellular domain and trigger its intramembrane proteolysis by gamma-secretase, releasing the CD43 cytoplasmic tail chain (CD43-ct) which translocates to the nucleus. During apoptosis, cleaves SMARCA2/BRM to produce a 160 kDa cleavage product which localizes to the cytosol. Cleaves MBP in B cell lysosomes at '221-Phe-|-Lys-222', degrading the major immunogenic MBP epitope and preventing the activation of MBP-specific autoreactive T cells. Cleaves annexin ANXA1 and antimicrobial peptide CAMP to produce peptides which act on neutrophil N-formyl peptide receptors to enhance the release of CXCL2. Acts as a ligand for the N-formyl peptide receptor FPR1, enhancing phagocyte chemotaxis. Has antibacterial activity against the Gram-negative bacteria N.gonorrhoeae and P.aeruginosa. Likely to act against N.gonorrhoeae by interacting with N.gonorrhoeae penA/PBP2. Exhibits potent antimicrobial activity against the Gram-positive bacterium L.monocytogenes. Has antibacterial activity against the Gram-positive bacterium S.aureus and degrades S.aureus biofilms, allowing polymorphonuclear leukocytes to penetrate the biofilm and phagocytose bacteria. Has antibacterial activity against M.tuberculosis. Induces platelet aggregation which is strongly potentiated in the presence of ELANE. This is Cathepsin G (Ctsg) from Mus musculus (Mouse).